The primary structure comprises 345 residues: Phenylalanine--tRNA ligase alpha subunit (345 aa).

Glu259 is a binding site for Mg(2+).

It belongs to the class-II aminoacyl-tRNA synthetase family. Phe-tRNA synthetase alpha subunit type 1 subfamily. In terms of assembly, tetramer of two alpha and two beta subunits. The cofactor is Mg(2+).

It is found in the cytoplasm. The enzyme catalyses tRNA(Phe) + L-phenylalanine + ATP = L-phenylalanyl-tRNA(Phe) + AMP + diphosphate + H(+). This Lactococcus lactis subsp. cremoris (strain MG1363) protein is Phenylalanine--tRNA ligase alpha subunit.